The chain runs to 348 residues: MTAPSQVLKIRRPDDWHLHLRDGDMLKTVVPYTSEIYGRAIVMPNLAPPVTTVEAAVAYRQRILDAVPAGHDFSPLMTCYLTDSLDPNELERGFNEGVFTAAKLYPANATTNSSHGVTSVDAIMPVLERMEKIGMPLLVHGEVTHADIDIFDREARFIESVMEPLRQRLTALKVVFEHITTKDAADYVRNGNERLAATITPQHLMFNRNHMLVGGVRPHLYCLPILKRNIHQQALRELVASGFNRVFLGTDSAPHARHRKESSCGCAGCFNAPTALGSYATVFEEMNALQHFEAFCSVNGPQFYGLPVNDTFIELVREEQQVAESIALTDDTLVPFLAGETVRWSVKQ.

Positions 17 and 19 each coordinate Zn(2+). Substrate contacts are provided by residues 19–21 (HLR) and asparagine 45. Positions 103, 140, and 178 each coordinate Zn(2+). An N6-carboxylysine modification is found at lysine 103. Histidine 140 is a substrate binding site. Substrate is bound at residue leucine 223. Residue aspartate 251 coordinates Zn(2+). Aspartate 251 is a catalytic residue. Substrate contacts are provided by histidine 255 and alanine 267.

The protein belongs to the metallo-dependent hydrolases superfamily. DHOase family. Class II DHOase subfamily. In terms of assembly, homodimer. Zn(2+) is required as a cofactor.

The catalysed reaction is (S)-dihydroorotate + H2O = N-carbamoyl-L-aspartate + H(+). It participates in pyrimidine metabolism; UMP biosynthesis via de novo pathway; (S)-dihydroorotate from bicarbonate: step 3/3. In terms of biological role, catalyzes the reversible cyclization of carbamoyl aspartate to dihydroorotate. The sequence is that of Dihydroorotase from Escherichia coli O17:K52:H18 (strain UMN026 / ExPEC).